We begin with the raw amino-acid sequence, 607 residues long: Elongation factor 4 (607 aa).

In terms of domain architecture, tr-type G spans 11–193; sequence SKIRNFSIIA…QIVEKVPAPT (183 aa). GTP-binding positions include 23-28 and 140-143; these read DHGKST and NKID.

The protein belongs to the TRAFAC class translation factor GTPase superfamily. Classic translation factor GTPase family. LepA subfamily.

It localises to the cell membrane. The catalysed reaction is GTP + H2O = GDP + phosphate + H(+). In terms of biological role, required for accurate and efficient protein synthesis under certain stress conditions. May act as a fidelity factor of the translation reaction, by catalyzing a one-codon backward translocation of tRNAs on improperly translocated ribosomes. Back-translocation proceeds from a post-translocation (POST) complex to a pre-translocation (PRE) complex, thus giving elongation factor G a second chance to translocate the tRNAs correctly. Binds to ribosomes in a GTP-dependent manner. The chain is Elongation factor 4 from Bacillus anthracis (strain A0248).